The chain runs to 281 residues: MSTTWFVGADWLAEHIDDPEIQIIDARMASPGQEDRNVAQEYLNGHIPGAVFFDIEALSDHTSPLPHMLPRPETFAVAMRELGVNQDKHLIVYDEGNLFSAPRAWWMLRTFGVEKVSILGGGLAGWQRDDLLLEEGAVELPEGEFNAAFNPEAVVKVTDVLLASHENTAQIIDARPAARFNAEVDEPRPGLRRGHIPGALNVPWTELVREGELKTTDELDAIFFGRGVSYDKPIIVSCGSGVTAAVVLLALATLDVPNVKLYDGAWSEWGARADLPVEPVK.

2 consecutive Rhodanese domains span residues 17–135 (DDPE…LLEE) and 165–278 (HENT…LPVE). A substrate-binding site is contributed by R179. The active-site Cysteine persulfide intermediate is the C238. The interval 238 to 244 (CGSGVTA) is substrate specificity.

Monomer.

Its subcellular location is the cytoplasm. The enzyme catalyses 2-oxo-3-sulfanylpropanoate + [thioredoxin]-dithiol = [thioredoxin]-disulfide + hydrogen sulfide + pyruvate + H(+). Functionally, catalyzes the transfer of sulfur from 3-mercaptopyruvate to a thiol-containing acceptor to form an intramolecular disulfide releasing hydrogen sulfide and pyruvate. May be involved in the enhancement of bacterial growth inhibition by serine. This chain is 3-mercaptopyruvate sulfurtransferase (sseA), found in Escherichia coli (strain K12).